The chain runs to 177 residues: UPF0114 protein HPP12_0190 (177 aa).

A run of 4 helical transmembrane segments spans residues 15-35 (WLLAPLCIAMSLVLVVLGYAF), 54-74 (LVLSALGLVDLLFMAGLVLMV), 102-122 (FNALKLKVSLSIVAISAIFLL), and 145-165 (PIFWQVVINLVFVCSALLAAV).

This sequence belongs to the UPF0114 family.

It localises to the cell membrane. The protein is UPF0114 protein HPP12_0190 of Helicobacter pylori (strain P12).